We begin with the raw amino-acid sequence, 232 residues long: Phosphatidylserine decarboxylase proenzyme (232 aa).

S190 functions as the Schiff-base intermediate with substrate; via pyruvic acid in the catalytic mechanism. S190 is subject to Pyruvic acid (Ser); by autocatalysis.

The protein belongs to the phosphatidylserine decarboxylase family. PSD-A subfamily. Heterodimer of a large membrane-associated beta subunit and a small pyruvoyl-containing alpha subunit. It depends on pyruvate as a cofactor. Is synthesized initially as an inactive proenzyme. Formation of the active enzyme involves a self-maturation process in which the active site pyruvoyl group is generated from an internal serine residue via an autocatalytic post-translational modification. Two non-identical subunits are generated from the proenzyme in this reaction, and the pyruvate is formed at the N-terminus of the alpha chain, which is derived from the carboxyl end of the proenzyme. The post-translation cleavage follows an unusual pathway, termed non-hydrolytic serinolysis, in which the side chain hydroxyl group of the serine supplies its oxygen atom to form the C-terminus of the beta chain, while the remainder of the serine residue undergoes an oxidative deamination to produce ammonia and the pyruvoyl prosthetic group on the alpha chain.

It localises to the cell membrane. It catalyses the reaction a 1,2-diacyl-sn-glycero-3-phospho-L-serine + H(+) = a 1,2-diacyl-sn-glycero-3-phosphoethanolamine + CO2. It functions in the pathway phospholipid metabolism; phosphatidylethanolamine biosynthesis; phosphatidylethanolamine from CDP-diacylglycerol: step 2/2. Functionally, catalyzes the formation of phosphatidylethanolamine (PtdEtn) from phosphatidylserine (PtdSer). In Afipia carboxidovorans (strain ATCC 49405 / DSM 1227 / KCTC 32145 / OM5) (Oligotropha carboxidovorans), this protein is Phosphatidylserine decarboxylase proenzyme.